We begin with the raw amino-acid sequence, 508 residues long: Steroid 17-alpha-hydroxylase/17,20 lyase (508 aa).

Asn-202 is a binding site for substrate. Cys-442 contacts heme.

It belongs to the cytochrome P450 family. Requires heme as cofactor.

The protein resides in the endoplasmic reticulum membrane. It localises to the microsome membrane. The enzyme catalyses a C21-steroid + reduced [NADPH--hemoprotein reductase] + O2 = a 17alpha-hydroxy-C21-steroid + oxidized [NADPH--hemoprotein reductase] + H2O + H(+). It carries out the reaction progesterone + reduced [NADPH--hemoprotein reductase] + O2 = 17alpha-hydroxyprogesterone + oxidized [NADPH--hemoprotein reductase] + H2O + H(+). It catalyses the reaction pregnenolone + reduced [NADPH--hemoprotein reductase] + O2 = 17alpha-hydroxypregnenolone + oxidized [NADPH--hemoprotein reductase] + H2O + H(+). The catalysed reaction is 17alpha-hydroxyprogesterone + reduced [NADPH--hemoprotein reductase] + O2 = androst-4-ene-3,17-dione + acetate + oxidized [NADPH--hemoprotein reductase] + H2O + 2 H(+). The enzyme catalyses 17alpha-hydroxyprogesterone + reduced [NADPH--hemoprotein reductase] + O2 = 16alpha,17alpha-dihydroxyprogesterone + oxidized [NADPH--hemoprotein reductase] + H2O + H(+). It carries out the reaction 16alpha,17alpha-dihydroxyprogesterone + reduced [NADPH--hemoprotein reductase] + O2 = 6beta,16alpha,17alpha-trihydroxyprogesterone + oxidized [NADPH--hemoprotein reductase] + H2O + H(+). It catalyses the reaction 17alpha-hydroxypregnenolone + reduced [NADPH--hemoprotein reductase] + O2 = 3beta-hydroxyandrost-5-en-17-one + acetate + oxidized [NADPH--hemoprotein reductase] + H2O + 2 H(+). The catalysed reaction is 16alpha,17alpha-dihydroxypregnenolone + reduced [NADPH--hemoprotein reductase] + O2 = 3beta,16alpha-dihydroxy-androst-5-en-17-one + acetate + oxidized [NADPH--hemoprotein reductase] + H2O + 2 H(+). The enzyme catalyses 3beta-hydroxyandrost-5-en-17-one + reduced [NADPH--hemoprotein reductase] + O2 = 3beta,16alpha-dihydroxy-androst-5-en-17-one + oxidized [NADPH--hemoprotein reductase] + H2O + H(+). It carries out the reaction androst-4-ene-3,17-dione + reduced [NADPH--hemoprotein reductase] + O2 = 16alpha-hydroxyandrost-4-ene-3,17-dione + oxidized [NADPH--hemoprotein reductase] + H2O + H(+). It participates in steroid hormone biosynthesis. It functions in the pathway steroid biosynthesis; glucocorticoid biosynthesis. Its activity is regulated as follows. Regulated predominantly by intracellular cAMP levels. The 17,20-lyase activity is stimulated by cytochrome b5, which acts as an allosteric effector increasing the Vmax of the lyase activity. Its function is as follows. A cytochrome P450 monooxygenase involved in corticoid and androgen biosynthesis. Catalyzes 17-alpha hydroxylation of C21 steroids, which is common for both pathways. A second oxidative step, required only for androgen synthesis, involves an acyl-carbon cleavage. The 17-alpha hydroxy intermediates, as part of adrenal glucocorticoids biosynthesis pathway, are precursors of cortisol. Hydroxylates steroid hormones, pregnenolone and progesterone to form 17-alpha hydroxy metabolites, followed by the cleavage of the C17-C20 bond to form C19 steroids, dehydroepiandrosterone (DHEA) and androstenedione. Has 16-alpha hydroxylase activity. Catalyzes 16-alpha hydroxylation of 17-alpha hydroxy pregnenolone, followed by the cleavage of the C17-C20 bond to form 16-alpha-hydroxy DHEA. Also 16-alpha hydroxylates androgens, relevant for estriol synthesis. Mechanistically, uses molecular oxygen inserting one oxygen atom into a substrate, and reducing the second into a water molecule, with two electrons provided by NADPH via cytochrome P450 reductase (CPR; NADPH-ferrihemoprotein reductase). The chain is Steroid 17-alpha-hydroxylase/17,20 lyase (CYP17A1) from Felis catus (Cat).